The chain runs to 264 residues: Putative ankyrin repeat domain-containing protein 19 (264 aa).

ANK repeat units lie at residues 67 to 96 (KDRTVLHLTCAHGRVEVVTLLLSRRCQINI), 100 to 129 (LNRTPLMKAVHCQEEACAIILLEHGANPNI), 133 to 162 (YSNTALHYAVYNKGTSLAEKLLSHHANIEA), 166 to 195 (EGNTPLLFAINSRRQQIVEFLLKNQANLHA), and 199 to 228 (FRRTALMLAVQHNSSSIVSLLLQQNINIFS).

The sequence is that of Putative ankyrin repeat domain-containing protein 19 (ANKRD19P) from Homo sapiens (Human).